The chain runs to 149 residues: Transcriptional repressor NrdR (149 aa).

A zinc finger spans residues 3 to 34 (CPFCSENDTKVIDSRLVADGHQVRRRRQCLAC). Residues 49–139 (PKVIKSNGNR…VYRSFEDIRE (91 aa)) enclose the ATP-cone domain.

Belongs to the NrdR family. It depends on Zn(2+) as a cofactor.

In terms of biological role, negatively regulates transcription of bacterial ribonucleotide reductase nrd genes and operons by binding to NrdR-boxes. This Vibrio atlanticus (strain LGP32) (Vibrio splendidus (strain Mel32)) protein is Transcriptional repressor NrdR.